Consider the following 229-residue polypeptide: Glycerol-3-phosphate acyltransferase (229 aa).

The next 6 membrane-spanning stretches (helical) occupy residues 2–22, 56–76, 93–113, 129–149, 151–171, and 178–198; these read WSLT…GALW, LATV…ASVI, FVVL…YPIF, LFAL…AVLL, SRYV…IVAL, and ADLD…IVVA.

It belongs to the PlsY family. In terms of assembly, probably interacts with PlsX.

The protein localises to the cell inner membrane. The catalysed reaction is an acyl phosphate + sn-glycerol 3-phosphate = a 1-acyl-sn-glycero-3-phosphate + phosphate. The protein operates within lipid metabolism; phospholipid metabolism. Functionally, catalyzes the transfer of an acyl group from acyl-phosphate (acyl-PO(4)) to glycerol-3-phosphate (G3P) to form lysophosphatidic acid (LPA). This enzyme utilizes acyl-phosphate as fatty acyl donor, but not acyl-CoA or acyl-ACP. This Salinibacter ruber (strain DSM 13855 / M31) protein is Glycerol-3-phosphate acyltransferase.